A 259-amino-acid chain; its full sequence is Phosphonates import ATP-binding protein PhnC (259 aa).

The ABC transporter domain maps to 4–245; sequence ISIQSVTKRF…ALRTIYQREG (242 aa). Residue 37-44 coordinates ATP; it reads GPSGAGKS.

This sequence belongs to the ABC transporter superfamily. Phosphonates importer (TC 3.A.1.9.1) family. As to quaternary structure, the complex is composed of two ATP-binding proteins (PhnC), two transmembrane proteins (PhnE) and a solute-binding protein (PhnD).

Its subcellular location is the cell inner membrane. The catalysed reaction is phosphonate(out) + ATP + H2O = phosphonate(in) + ADP + phosphate + H(+). In terms of biological role, part of the ABC transporter complex PhnCDE involved in phosphonates import. Responsible for energy coupling to the transport system. This chain is Phosphonates import ATP-binding protein PhnC, found in Thiobacillus denitrificans (strain ATCC 25259 / T1).